The primary structure comprises 470 residues: Poly(A) polymerase catalytic subunit (470 aa).

Catalysis depends on residues D192 and D194.

Belongs to the poxviridae poly(A) polymerase catalytic subunit family. As to quaternary structure, heterodimer of a large (catalytic) subunit and a small (regulatory) subunit.

The catalysed reaction is RNA(n) + ATP = RNA(n)-3'-adenine ribonucleotide + diphosphate. Its function is as follows. Polymerase that creates the 3'-poly(A) tail of mRNA's. The protein is Poly(A) polymerase catalytic subunit (PAPL) of Erythrocebus patas (Red guenon).